We begin with the raw amino-acid sequence, 446 residues long: Exodeoxyribonuclease 7 large subunit (446 aa).

This sequence belongs to the XseA family. In terms of assembly, heterooligomer composed of large and small subunits.

It is found in the cytoplasm. The enzyme catalyses Exonucleolytic cleavage in either 5'- to 3'- or 3'- to 5'-direction to yield nucleoside 5'-phosphates.. Functionally, bidirectionally degrades single-stranded DNA into large acid-insoluble oligonucleotides, which are then degraded further into small acid-soluble oligonucleotides. This is Exodeoxyribonuclease 7 large subunit from Geotalea uraniireducens (strain Rf4) (Geobacter uraniireducens).